The primary structure comprises 427 residues: Trigger factor (427 aa).

The region spanning 163–248 is the PPIase FKBP-type domain; that stretch reads GDTVILDFEG…LHEIKTKEVP (86 aa).

This sequence belongs to the FKBP-type PPIase family. Tig subfamily.

Its subcellular location is the cytoplasm. It carries out the reaction [protein]-peptidylproline (omega=180) = [protein]-peptidylproline (omega=0). In terms of biological role, involved in protein export. Acts as a chaperone by maintaining the newly synthesized protein in an open conformation. Functions as a peptidyl-prolyl cis-trans isomerase. The chain is Trigger factor from Listeria welshimeri serovar 6b (strain ATCC 35897 / DSM 20650 / CCUG 15529 / CIP 8149 / NCTC 11857 / SLCC 5334 / V8).